Consider the following 132-residue polypeptide: Ribosome-binding factor A (132 aa).

The protein belongs to the RbfA family. In terms of assembly, monomer. Binds 30S ribosomal subunits, but not 50S ribosomal subunits or 70S ribosomes.

Its subcellular location is the cytoplasm. One of several proteins that assist in the late maturation steps of the functional core of the 30S ribosomal subunit. Associates with free 30S ribosomal subunits (but not with 30S subunits that are part of 70S ribosomes or polysomes). Required for efficient processing of 16S rRNA. May interact with the 5'-terminal helix region of 16S rRNA. This chain is Ribosome-binding factor A, found in Pseudomonas putida (strain ATCC 700007 / DSM 6899 / JCM 31910 / BCRC 17059 / LMG 24140 / F1).